The following is a 1028-amino-acid chain: RNA cytidine acetyltransferase 2 (1028 aa).

Residues 286–295 and arginine 458 each bind ATP; that span reads GRGKSAALGL. The 184-residue stretch at 546-729 folds into the N-acetyltransferase domain; it reads VLLGPVDESQ…FAPFYVSQIP (184 aa). Residues 617-619, 624-630, and lysine 717 contribute to the acetyl-CoA site; these read IAV and MKMGYGS. The interval 982–1028 is disordered; sequence SGIISVKSTKSENENGFDKSTKKRSSDKRSSSSSKSKSSKKRKSLKE. Residues 990–1001 show a composition bias toward basic and acidic residues; that stretch reads TKSENENGFDKS. Positions 1018 to 1028 are enriched in basic residues; it reads KSSKKRKSLKE.

This sequence belongs to the RNA cytidine acetyltransferase family. NAT10 subfamily.

The protein resides in the nucleus. It localises to the nucleolus. It catalyses the reaction a cytidine in 18S rRNA + acetyl-CoA + ATP + H2O = an N(4)-acetylcytidine in 18S rRNA + ADP + phosphate + CoA + H(+). The enzyme catalyses a cytidine in tRNA + acetyl-CoA + ATP + H2O = an N(4)-acetylcytidine in tRNA + ADP + phosphate + CoA + H(+). Functionally, RNA cytidine acetyltransferase with specificity toward both 18S rRNA and tRNAs. Catalyzes the formation of N(4)-acetylcytidine (ac4C) in 18S rRNA. Required for early nucleolar cleavages of precursor rRNA at sites A0, A1 and A2 during 18S rRNA synthesis. Catalyzes the formation of ac4C in serine and leucine tRNAs. Requires a tRNA-binding adapter protein for full tRNA acetyltransferase activity but not for 18S rRNA acetylation. The polypeptide is RNA cytidine acetyltransferase 2 (Arabidopsis thaliana (Mouse-ear cress)).